The sequence spans 262 residues: Flap endonuclease Xni (262 aa).

D105 provides a ligand contact to Mg(2+). One can recognise a 5'-3' exonuclease domain in the interval 162–257 (ERSQFLDLMA…FRVIDSPPEK (96 aa)). K(+) is bound by residues L172, A173, P181, I183, and I186. Positions 185 to 190 (GIGPKS) are interaction with DNA.

It belongs to the Xni family. Mg(2+) serves as cofactor. The cofactor is K(+).

Its function is as follows. Has flap endonuclease activity. During DNA replication, flap endonucleases cleave the 5'-overhanging flap structure that is generated by displacement synthesis when DNA polymerase encounters the 5'-end of a downstream Okazaki fragment. This is Flap endonuclease Xni from Shewanella baltica (strain OS155 / ATCC BAA-1091).